A 700-amino-acid polypeptide reads, in one-letter code: Methionine--tRNA ligase (700 aa).

A 'HIGH' region motif is present at residues 16–26; sequence PYANGAFHVGH. Positions 148, 151, 161, and 164 each coordinate Zn(2+). The 'KMSKS' region signature appears at 337–341; sequence KMSKS. Lys-340 serves as a coordination point for ATP. A tRNA-binding domain is found at 594 to 700; it reads DFAKIDLRIA…PGAEPGMRVG (107 aa).

It belongs to the class-I aminoacyl-tRNA synthetase family. MetG type 1 subfamily. In terms of assembly, homodimer. Requires Zn(2+) as cofactor.

It localises to the cytoplasm. The enzyme catalyses tRNA(Met) + L-methionine + ATP = L-methionyl-tRNA(Met) + AMP + diphosphate. Functionally, is required not only for elongation of protein synthesis but also for the initiation of all mRNA translation through initiator tRNA(fMet) aminoacylation. The polypeptide is Methionine--tRNA ligase (Janthinobacterium sp. (strain Marseille) (Minibacterium massiliensis)).